Reading from the N-terminus, the 98-residue chain is NADH-ubiquinone oxidoreductase chain 4L (98 aa).

3 helical membrane-spanning segments follow: residues 1–21 (MSLV…GLLM), 29–49 (SLLC…LTIL), and 61–81 (IILL…LVMV).

The protein belongs to the complex I subunit 4L family. As to quaternary structure, core subunit of respiratory chain NADH dehydrogenase (Complex I) which is composed of 45 different subunits.

The protein localises to the mitochondrion inner membrane. It carries out the reaction a ubiquinone + NADH + 5 H(+)(in) = a ubiquinol + NAD(+) + 4 H(+)(out). Functionally, core subunit of the mitochondrial membrane respiratory chain NADH dehydrogenase (Complex I) which catalyzes electron transfer from NADH through the respiratory chain, using ubiquinone as an electron acceptor. Part of the enzyme membrane arm which is embedded in the lipid bilayer and involved in proton translocation. In Muntiacus vuquangensis (Giant muntjac), this protein is NADH-ubiquinone oxidoreductase chain 4L (MT-ND4L).